Consider the following 143-residue polypeptide: Large ribosomal subunit protein uL11 (143 aa).

Belongs to the universal ribosomal protein uL11 family. As to quaternary structure, part of the ribosomal stalk of the 50S ribosomal subunit. Interacts with L10 and the large rRNA to form the base of the stalk. L10 forms an elongated spine to which L12 dimers bind in a sequential fashion forming a multimeric L10(L12)X complex. In terms of processing, one or more lysine residues are methylated.

Functionally, forms part of the ribosomal stalk which helps the ribosome interact with GTP-bound translation factors. In Variovorax paradoxus (strain S110), this protein is Large ribosomal subunit protein uL11.